A 582-amino-acid polypeptide reads, in one-letter code: Histone deacetylase 9-B (582 aa).

The interaction with mef2 stretch occupies residues 146–195; it reads SNEVKQKLQEFLLSKSTKDITLNGIPQKITQSSKLWYTASHHTSLEQSSP. The segment covering 189–205 has biased composition (polar residues); the sequence is SLEQSSPPLGGASSSCK. Disordered regions lie at residues 189–254, 270–314, 409–447, and 496–567; these read SLEQ…KEGN, TASS…QSRL, LSSG…RTQS, and VHLQ…NQSS. Basic and acidic residues-rich tracts occupy residues 213–224 and 238–253; these read DYRDDFPLRKTV and KVAE…RKEG. Low complexity predominate over residues 270–289; sequence TASSSAPGSGPSSPNGACSA. The span at 295–314 shows a compositional bias: polar residues; sequence GPSSLPVTTRTERWPSQSRL.

This sequence belongs to the histone deacetylase family. HD type 2 subfamily. In terms of assembly, homodimer. Interacts with mef2.

It localises to the nucleus. It carries out the reaction N(6)-acetyl-L-lysyl-[histone] + H2O = L-lysyl-[histone] + acetate. Devoided of intrinsic deacetylase activity, promotes the deacetylation of lysine residues on the N-terminal part of the core histones (H2A, H2B, H3 and H4) by recruiting other histone deacetylases. Histone deacetylation gives a tag for epigenetic repression and plays an important role in transcriptional regulation, cell cycle progression and developmental events. Represses MEF2-dependent transcription. This chain is Histone deacetylase 9-B (hdac9b), found in Danio rerio (Zebrafish).